The chain runs to 372 residues: Cytochrome b (372 aa).

Helical transmembrane passes span 25–45, 69–90, 105–125, and 170–190; these read FGSM…FLAI, WTMQ…YIHI, WLSG…GYVL, and FFAL…IHII. Heme b-binding residues include histidine 75 and histidine 89. Histidine 174 and histidine 188 together coordinate heme b. Position 193 (histidine 193) interacts with a ubiquinone. Transmembrane regions (helical) follow at residues 218-238, 280-300, 312-332, and 339-358; these read YKDM…LSFS, LGGT…PFTH, LTQI…WTAT, and FIII…IMNP.

The protein belongs to the cytochrome b family. As to quaternary structure, the cytochrome bc1 complex contains 3 respiratory subunits (MT-CYB, CYC1 and UQCRFS1), 2 core proteins (UQCRC1 and UQCRC2) and probably 6 low-molecular weight proteins. Heme b is required as a cofactor.

It is found in the mitochondrion inner membrane. Functionally, component of the ubiquinol-cytochrome c reductase complex (complex III or cytochrome b-c1 complex) that is part of the mitochondrial respiratory chain. The b-c1 complex mediates electron transfer from ubiquinol to cytochrome c. Contributes to the generation of a proton gradient across the mitochondrial membrane that is then used for ATP synthesis. This chain is Cytochrome b (MT-CYB), found in Ophiophagus hannah (King cobra).